We begin with the raw amino-acid sequence, 456 residues long: Exodeoxyribonuclease 7 large subunit (456 aa).

The protein belongs to the XseA family. In terms of assembly, heterooligomer composed of large and small subunits.

It is found in the cytoplasm. The enzyme catalyses Exonucleolytic cleavage in either 5'- to 3'- or 3'- to 5'-direction to yield nucleoside 5'-phosphates.. Bidirectionally degrades single-stranded DNA into large acid-insoluble oligonucleotides, which are then degraded further into small acid-soluble oligonucleotides. The protein is Exodeoxyribonuclease 7 large subunit of Lactobacillus delbrueckii subsp. bulgaricus (strain ATCC BAA-365 / Lb-18).